The chain runs to 760 residues: ATP-dependent DNA helicase Hel308 (760 aa).

Residues glutamine 28 and 46-53 (IPTASGKT) contribute to the ATP site. The Helicase ATP-binding domain occupies 33 to 199 (EMGLLEKKNL…WLGAALVLSE (167 aa)). Residues 144–147 (DEIH) carry the DEAH box motif. The Helicase C-terminal domain maps to 232 to 426 (AVNLVLDTIK…SKLGTENALR (195 aa)).

This sequence belongs to the helicase family. Hel308 subfamily. In terms of assembly, monomer.

The catalysed reaction is Couples ATP hydrolysis with the unwinding of duplex DNA by translocating in the 3'-5' direction.. The enzyme catalyses ATP + H2O = ADP + phosphate + H(+). DNA-dependent ATPase and 3'-5' DNA helicase that may be involved in repair of stalled replication forks. This Methanococcoides burtonii (strain DSM 6242 / NBRC 107633 / OCM 468 / ACE-M) protein is ATP-dependent DNA helicase Hel308.